The chain runs to 511 residues: ATP synthase subunit alpha 2 (511 aa).

173–180 is an ATP binding site; the sequence is GDRQTGKS.

The protein belongs to the ATPase alpha/beta chains family. As to quaternary structure, F-type ATPases have 2 components, CF(1) - the catalytic core - and CF(0) - the membrane proton channel. CF(1) has five subunits: alpha(3), beta(3), gamma(1), delta(1), epsilon(1). CF(0) has three main subunits: a(1), b(2) and c(9-12). The alpha and beta chains form an alternating ring which encloses part of the gamma chain. CF(1) is attached to CF(0) by a central stalk formed by the gamma and epsilon chains, while a peripheral stalk is formed by the delta and b chains.

The protein localises to the cell inner membrane. The catalysed reaction is ATP + H2O + 4 H(+)(in) = ADP + phosphate + 5 H(+)(out). Produces ATP from ADP in the presence of a proton gradient across the membrane. The alpha chain is a regulatory subunit. The chain is ATP synthase subunit alpha 2 from Nitrosospira multiformis (strain ATCC 25196 / NCIMB 11849 / C 71).